A 196-amino-acid polypeptide reads, in one-letter code: Large ribosomal subunit protein mL66 (196 aa).

The N-terminal 34 residues, 1–34, are a transit peptide targeting the mitochondrion; the sequence is MAALRRLVSGCGRQLQAFLAGPAATGWLWLPARG.

This sequence belongs to the bacterial ribosomal protein bS18 family. Mitochondrion-specific ribosomal protein mL66 subfamily. In terms of assembly, component of the mitochondrial ribosome small subunit (28S) which comprises a 12S rRNA and about 30 distinct proteins.

It is found in the mitochondrion. This chain is Large ribosomal subunit protein mL66 (Mrps18a), found in Mus musculus (Mouse).